A 982-amino-acid polypeptide reads, in one-letter code: Pentatricopeptide repeat-containing protein At5g62370 (982 aa).

24 PPR repeats span residues 94–129 (DSSC…GIVP), 130–164 (DSSV…GYAP), 165–199 (SRNS…GSGL), 200–234 (WLWC…TRMP), 236–270 (PVNL…GYYV), 271–305 (DKVM…SFEL), 306–340 (DPCI…GVQS), 341–376 (NVFT…DISR), 377–411 (NVHC…GIVP), 412–446 (DHIT…GCGI), 476–510 (AAVG…GCTP), 511–545 (LPFS…DFVP), 546–580 (DVDT…GLRP), 581–615 (TVAI…GIQP), 616–650 (DEIA…FLRP), 651–685 (SSFT…GLSP), 686–720 (NVVL…DIKH), 721–755 (DHIA…KLLQ), 759–789 (RTKP…VKKS), 793–827 (NLYL…GIVP), 828–858 (NLVT…TNCE), 860–894 (DQVM…GINP), 895–929 (NKDS…DIWP), and 930–964 (RSIN…GRSL).

Belongs to the PPR family. P subfamily.

The protein is Pentatricopeptide repeat-containing protein At5g62370 of Arabidopsis thaliana (Mouse-ear cress).